Reading from the N-terminus, the 484-residue chain is Aldehyde dehydrogenase family 3 member F1 (484 aa).

Position 192-197 (192-197 (GSPKIG)) interacts with NAD(+). Glu214 (proton acceptor) is an active-site residue. Cys252 (nucleophile) is an active-site residue.

Belongs to the aldehyde dehydrogenase family. In terms of assembly, homotetramer. Constituively expressed at low levels.

It carries out the reaction an aldehyde + NAD(+) + H2O = a carboxylate + NADH + 2 H(+). This chain is Aldehyde dehydrogenase family 3 member F1 (ALDH3F1), found in Arabidopsis thaliana (Mouse-ear cress).